Here is a 471-residue protein sequence, read N- to C-terminus: WASH complex subunit 1 (471 aa).

The interval 1–54 (MTPTGTQHSLAGQTYAVPLIQPDLRREEAIQQVADALQYLQKVSGDIFSRISQR) is required for WASH complex assembly. The segment at 1-167 (MTPTGTQHSL…EGLGGLPSNI (167 aa)) is WHD1. Residues 297 to 471 (EDGVLTARPP…GEEDEDDWES (175 aa)) are disordered. Residues 304-336 (RPPPPPPPPPPPAPAVLMSVPPPPPPPQAPPGQ) show a composition bias toward pro residues. The interval 353–471 (QGAPKEVVDP…GEEDEDDWES (119 aa)) is VCA. Residues 365–387 (GRATLLESIRQAGGIGKAKLRSV) form the WH2 domain. Residues 386–402 (SVKERKLEKKKQKEQEQ) show a composition bias toward basic and acidic residues. Positions 428-442 (SGKGPGSGASEGPGG) are enriched in gly residues. Residues 462-471 (GEEDEDDWES) are compositionally biased toward acidic residues.

It belongs to the WASH1 family. Component of the WASH core complex also described as WASH regulatory complex SHRC composed of WASHC1, WASHC2, WASHC3, WASHC4 and WASHC5. The WASH core complex associates with the F-actin-capping protein dimer (formed by CAPZA1, CAPZA2 or CAPZA3 and CAPZB); the assembly has been initially described as WASH complex. Interacts (via WHD1 region) with WASHC2; the interaction is direct. Interacts with alpha-tubulin. Interacts with BECN1; WASHC1 and AMBRA1 can competitively interact with BECN1. Interacts with BLOC1S2; may associate with the BLOC-1 complex. Interacts with tubulin gamma chain (TUBG1 or TUBG2). Interacts with TBC1D23.

Its subcellular location is the early endosome membrane. It localises to the recycling endosome membrane. The protein localises to the late endosome. The protein resides in the cytoplasmic vesicle. It is found in the autophagosome. Its subcellular location is the cytoplasm. It localises to the cytoskeleton. The protein localises to the microtubule organizing center. The protein resides in the centrosome. It is found in the centriole. Acts as a component of the WASH core complex that functions as a nucleation-promoting factor (NPF) at the surface of endosomes, where it recruits and activates the Arp2/3 complex to induce actin polymerization, playing a key role in the fission of tubules that serve as transport intermediates during endosome sorting. Involved in endocytic trafficking of EGF. Involved in transferrin receptor recycling. Regulates the trafficking of endosomal alpha5beta1 integrin to the plasma membrane and involved in invasive cell migration. In T-cells involved in endosome-to-membrane recycling of receptors including T-cell receptor (TCR), CD28 and ITGAL; proposed to be implicated in T-cell proliferation and effector function. In dendritic cells involved in endosome-to-membrane recycling of major histocompatibility complex (MHC) class II probably involving retromer and subsequently allowing antigen sampling, loading and presentation during T-cell activation. Involved in negative regulation of autophagy independently from its role in endosomal sorting by inhibiting BECN1 ubiquitination to inactivate PIK3C3/Vps34 activity. The sequence is that of WASH complex subunit 1 from Bos taurus (Bovine).